Here is a 289-residue protein sequence, read N- to C-terminus: (3R)-3-[(carboxymethyl)amino]fatty acid oxygenase/decarboxylase (289 aa).

A (3R)-3-[(carboxymethyl)amino]fatty acid is bound by residues tyrosine 65, tyrosine 70, and glycine 93. Residues histidine 97 and aspartate 99 each coordinate Fe(2+). A (3R)-3-[(carboxymethyl)amino]fatty acid-binding residues include tyrosine 100 and lysine 158. Histidine 260 lines the Fe(2+) pocket. Histidine 264 lines the 2-oxoglutarate pocket. Arginine 275 is an a (3R)-3-[(carboxymethyl)amino]fatty acid binding site.

It belongs to the TfdA dioxygenase family. It depends on Fe(2+) as a cofactor.

It catalyses the reaction a (3R)-3-[(carboxymethyl)amino]fatty acid + 2 2-oxoglutarate + 2 O2 = a (3R)-3-isocyanyl-fatty acid + 2 succinate + 3 CO2 + 2 H2O. The enzyme catalyses a (3R)-3-[(carboxymethyl)amino]fatty acid + 2-oxoglutarate + O2 = a (3R)-3-{[carboxy(hydroxy)methyl]amino}fatty acid + succinate + CO2. It carries out the reaction a (3R)-3-{[carboxy(hydroxy)methyl]amino}fatty acid + 2-oxoglutarate + O2 = a (3R)-3-isocyanyl-fatty acid + succinate + 2 CO2 + 2 H2O. Involved in the biosynthesis of a unique class of isonitrile lipopeptides (INLPs) that seem to play a role in metal acquisition in M.marinum. Catalyzes the conversion of (3R)-3-[(carboxymethyl)amino]fatty acids to (3R)-3-isocyanyl-fatty acids through an oxidative decarboxylation mechanism, thereby generating the isonitrile group of INLPs. In Mycobacterium marinum (strain ATCC BAA-535 / M), this protein is (3R)-3-[(carboxymethyl)amino]fatty acid oxygenase/decarboxylase.